The primary structure comprises 637 residues: Threonine--tRNA ligase (637 aa).

Residues Met1–Thr61 enclose the TGS domain. A catalytic region spans residues Asp242–Pro533. Residues Cys333, His384, and His510 each contribute to the Zn(2+) site.

Belongs to the class-II aminoacyl-tRNA synthetase family. In terms of assembly, homodimer. Requires Zn(2+) as cofactor.

Its subcellular location is the cytoplasm. It catalyses the reaction tRNA(Thr) + L-threonine + ATP = L-threonyl-tRNA(Thr) + AMP + diphosphate + H(+). In terms of biological role, catalyzes the attachment of threonine to tRNA(Thr) in a two-step reaction: L-threonine is first activated by ATP to form Thr-AMP and then transferred to the acceptor end of tRNA(Thr). Also edits incorrectly charged L-seryl-tRNA(Thr). This chain is Threonine--tRNA ligase, found in Neisseria meningitidis serogroup A / serotype 4A (strain DSM 15465 / Z2491).